The primary structure comprises 374 residues: ORC1-type DNA replication protein 6 (374 aa).

ATP-binding positions include 66 to 70 (TGKTT), Tyr209, and Arg221.

This sequence belongs to the CDC6/cdc18 family.

Functionally, involved in regulation of DNA replication. This chain is ORC1-type DNA replication protein 6 (orc6), found in Halobacterium salinarum (strain ATCC 700922 / JCM 11081 / NRC-1) (Halobacterium halobium).